The primary structure comprises 81 residues: Large ribosomal subunit protein uL24 (81 aa).

Belongs to the universal ribosomal protein uL24 family. In terms of assembly, part of the 50S ribosomal subunit.

One of two assembly initiator proteins, it binds directly to the 5'-end of the 23S rRNA, where it nucleates assembly of the 50S subunit. Functionally, one of the proteins that surrounds the polypeptide exit tunnel on the outside of the subunit. The protein is Large ribosomal subunit protein uL24 of Chloroherpeton thalassium (strain ATCC 35110 / GB-78).